The primary structure comprises 422 residues: Glutamate-1-semialdehyde 2,1-aminomutase (422 aa).

Lys264 carries the N6-(pyridoxal phosphate)lysine modification.

This sequence belongs to the class-III pyridoxal-phosphate-dependent aminotransferase family. HemL subfamily. As to quaternary structure, homodimer. Pyridoxal 5'-phosphate serves as cofactor.

The protein resides in the cytoplasm. It carries out the reaction (S)-4-amino-5-oxopentanoate = 5-aminolevulinate. The protein operates within porphyrin-containing compound metabolism; protoporphyrin-IX biosynthesis; 5-aminolevulinate from L-glutamyl-tRNA(Glu): step 2/2. The protein is Glutamate-1-semialdehyde 2,1-aminomutase of Clostridium acetobutylicum (strain ATCC 824 / DSM 792 / JCM 1419 / IAM 19013 / LMG 5710 / NBRC 13948 / NRRL B-527 / VKM B-1787 / 2291 / W).